Here is a 220-residue protein sequence, read N- to C-terminus: MSAIPVIAIDGPTASGKGTVASLVAEKLGFHYLDSGALYRLVALASEKHGIDVKNGPELGLLVPKLLISFKNSQIFLDDDEVTDAIRTESIGLRASALAVHPEVRSALVGLQRSFRQFPGLVADGRDMASVIFPDAVLKVFLTATAAARAERRYKQLIAKGISAKLSDLLQDLQERDARDSSRGTAPLLVADGAKVLETSDLSIDQAVKTVLDWYQSAIA.

Position 11–19 (11–19 (GPTASGKGT)) interacts with ATP.

The protein belongs to the cytidylate kinase family. Type 1 subfamily.

The protein resides in the cytoplasm. The catalysed reaction is CMP + ATP = CDP + ADP. It carries out the reaction dCMP + ATP = dCDP + ADP. This Polynucleobacter asymbioticus (strain DSM 18221 / CIP 109841 / QLW-P1DMWA-1) (Polynucleobacter necessarius subsp. asymbioticus) protein is Cytidylate kinase.